The chain runs to 712 residues: Eukaryotic translation initiation factor 3 subunit B (712 aa).

Methionine 1 carries the N-acetylmethionine modification. One can recognise an RRM domain in the interval asparagine 56–aspartate 143.

Belongs to the eIF-3 subunit B family. As to quaternary structure, component of the eukaryotic translation initiation factor 3 (eIF-3) complex, which is composed of at least 13 different subunits. Binds to the translation initiation factor TIF3H1.

It is found in the cytoplasm. Its function is as follows. RNA-binding component of the eukaryotic translation initiation factor 3 (eIF-3) complex, which is involved in protein synthesis of a specialized repertoire of mRNAs and, together with other initiation factors, stimulates binding of mRNA and methionyl-tRNAi to the 40S ribosome. The eIF-3 complex specifically targets and initiates translation of a subset of mRNAs involved in cell proliferation. The chain is Eukaryotic translation initiation factor 3 subunit B (TIF3B1) from Arabidopsis thaliana (Mouse-ear cress).